Reading from the N-terminus, the 501-residue chain is Phenylalanine--tRNA ligase alpha subunit (501 aa).

L-phenylalanine is bound by residues threonine 340 and phenylalanine 423. Glutamate 425 provides a ligand contact to Mg(2+). L-phenylalanine is bound at residue phenylalanine 448.

The protein belongs to the class-II aminoacyl-tRNA synthetase family. Phe-tRNA synthetase alpha subunit type 2 subfamily. Tetramer of two alpha and two beta subunits. Mg(2+) serves as cofactor.

The protein resides in the cytoplasm. It catalyses the reaction tRNA(Phe) + L-phenylalanine + ATP = L-phenylalanyl-tRNA(Phe) + AMP + diphosphate + H(+). In Methanococcus vannielii (strain ATCC 35089 / DSM 1224 / JCM 13029 / OCM 148 / SB), this protein is Phenylalanine--tRNA ligase alpha subunit.